The primary structure comprises 260 residues: Neuraminyllactose-binding hemagglutinin (260 aa).

Residues 1-27 (MRANNHFKDFAWKKCLLGASVVALLVG) form the signal peptide. Cysteine 28 carries the N-palmitoyl cysteine lipid modification. Cysteine 28 carries the S-diacylglycerol cysteine lipid modification. An N-acetyl-neuraminyl-alpha(2,3)-lactose binding motif region spans residues 134–139 (KRTIQK).

It localises to the cell outer membrane. The polypeptide is Neuraminyllactose-binding hemagglutinin (hpaA) (Helicobacter pylori (Campylobacter pylori)).